A 411-amino-acid chain; its full sequence is Arginine deiminase (411 aa).

Cys401 (amidino-cysteine intermediate) is an active-site residue.

This sequence belongs to the arginine deiminase family.

It localises to the cytoplasm. The catalysed reaction is L-arginine + H2O = L-citrulline + NH4(+). Its pathway is amino-acid degradation; L-arginine degradation via ADI pathway; carbamoyl phosphate from L-arginine: step 1/2. The protein is Arginine deiminase of Streptococcus equi subsp. equi (strain 4047).